The primary structure comprises 117 residues: Large ribosomal subunit protein uL18 (117 aa).

The protein belongs to the universal ribosomal protein uL18 family. In terms of assembly, part of the 50S ribosomal subunit; part of the 5S rRNA/L5/L18/L25 subcomplex. Contacts the 5S and 23S rRNAs.

This is one of the proteins that bind and probably mediate the attachment of the 5S RNA into the large ribosomal subunit, where it forms part of the central protuberance. The protein is Large ribosomal subunit protein uL18 of Francisella philomiragia subsp. philomiragia (strain ATCC 25017 / CCUG 19701 / FSC 153 / O#319-036).